A 643-amino-acid chain; its full sequence is ATP-dependent RNA helicase DeaD (643 aa).

Residues 6-34 (TTFADLGLKAPILEALTDLGYEKPSPIQA) carry the Q motif motif. A Helicase ATP-binding domain is found at 37–208 (IPHLLDGRDV…RRFMKEPQEV (172 aa)). 50–57 (AQTGSGKT) is a binding site for ATP. The short motif at 156–159 (DEAD) is the DEAD box element. In terms of domain architecture, Helicase C-terminal spans 232 to 379 (KNEALVRFLE…EVELPNAELL (148 aa)). Disordered regions lie at residues 440–482 (VPPV…KRER) and 557–643 (MNMQ…GGDA). Basic and acidic residues-rich tracts occupy residues 448–482 (PRRE…KRER) and 567–643 (PRTE…GGDA).

This sequence belongs to the DEAD box helicase family. DeaD/CsdA subfamily.

The protein localises to the cytoplasm. The catalysed reaction is ATP + H2O = ADP + phosphate + H(+). Functionally, DEAD-box RNA helicase involved in various cellular processes at low temperature, including ribosome biogenesis, mRNA degradation and translation initiation. In Klebsiella pneumoniae, this protein is ATP-dependent RNA helicase DeaD.